The primary structure comprises 1517 residues: DNA-directed RNA polymerase subunit beta' (1517 aa).

Cysteine 71, cysteine 73, cysteine 86, and cysteine 89 together coordinate Zn(2+). The Mg(2+) site is built by aspartate 482, aspartate 484, and aspartate 486. Residues cysteine 812, cysteine 886, cysteine 893, and cysteine 896 each coordinate Zn(2+).

Belongs to the RNA polymerase beta' chain family. The RNAP catalytic core consists of 2 alpha, 1 beta, 1 beta' and 1 omega subunit. When a sigma factor is associated with the core the holoenzyme is formed, which can initiate transcription. It depends on Mg(2+) as a cofactor. Zn(2+) serves as cofactor.

It carries out the reaction RNA(n) + a ribonucleoside 5'-triphosphate = RNA(n+1) + diphosphate. In terms of biological role, DNA-dependent RNA polymerase catalyzes the transcription of DNA into RNA using the four ribonucleoside triphosphates as substrates. The polypeptide is DNA-directed RNA polymerase subunit beta' (Campylobacter jejuni (strain RM1221)).